A 1129-amino-acid chain; its full sequence is Phospholipid-transporting ATPase 11C (1129 aa).

Topologically, residues 1 to 83 (MFRRTLNRLC…IIFLVQVTVD (83 aa)) are cytoplasmic. The helical transmembrane segment at 84–104 (TPTSPVTSGLPLFFVITVTAI) threads the bilayer. Residues 105-287 (KQGYEDWLRH…SQKCSAVEKS (183 aa)) are Extracellular-facing. A helical transmembrane segment spans residues 288–308 (INAFLIVYLFILLTKAAVCTT). Over 309–343 (LKYVWQSSPYNDEPWYNQKTQKERETFQVLKMFTD) the chain is Cytoplasmic. The chain crosses the membrane as a helical span at residues 344–364 (FLSFMVLFNFIIPVSMYVTVE). The Extracellular segment spans residues 365-876 (MQKFLGSFFI…YVRIAHLVQY (512 aa)). The active-site 4-aspartylphosphate intermediate is aspartate 409. The ATP site is built by aspartate 409, lysine 410, and threonine 411. Residue aspartate 409 participates in Mg(2+) binding. Position 411 (threonine 411) interacts with Mg(2+). Position 442 is a phosphoserine (serine 442). The ATP site is built by glutamate 498, phenylalanine 540, lysine 563, and arginine 594. Residues 607 to 643 (DFERINAQLVEAKMALQDREEKLEKVFDEIETNMNLI) adopt a coiled-coil conformation. ATP is bound by residues threonine 674, glycine 675, and aspartate 676. Residues 695 to 726 (TELLELTTKTIEESERKEDRLHELLIEYRKKL) are a coiled coil. 2 residues coordinate ATP: arginine 789 and lysine 795. Aspartate 816 contributes to the Mg(2+) binding site. ATP is bound by residues asparagine 819 and aspartate 820. Mg(2+) is bound at residue aspartate 820. A helical membrane pass occupies residues 877 to 897 (FFYKNLCFILPQFLYQFFCGF). Residues 898–905 (SQQPLYDA) are Cytoplasmic-facing. A helical membrane pass occupies residues 906-926 (AYLTMYNICFTSLPILAYSLL). Residues 927–952 (EQHINIDTLTADPRLYMKITGNAMLQ) lie on the Extracellular side of the membrane. The chain crosses the membrane as a helical span at residues 953 to 973 (LGPFLHWTFLAAFEGTVFFFG). The Cytoplasmic segment spans residues 974–988 (TYFLFQTSSLEDNGK). Residues 989-1009 (IYGNWTFGTIVFTVLVFTVTL) form a helical membrane-spanning segment. Over 1010-1023 (KLALDTRFWTWINH) the chain is Extracellular. A helical membrane pass occupies residues 1024 to 1044 (FVIWGSLAFYVFFSFFWGGII). Residues 1045–1066 (WPFLKQQRMYFVFAQMLCSVST) are Cytoplasmic-facing. A helical membrane pass occupies residues 1067 to 1087 (WLAIILLIFISLFPEILLIVV). Residues 1088–1129 (KNVRRRSARRNLSCRRASDSLSARPSVRPLLLRTFSDESNIL) lie on the Extracellular side of the membrane. A phosphoserine mark is found at serine 1105, serine 1113, and serine 1123. The short motif at 1113–1118 (SVRPLL) is the Di-leucine motif element.

It belongs to the cation transport ATPase (P-type) (TC 3.A.3) family. Type IV subfamily. Component of a P4-ATPase flippase complex which consists of a catalytic alpha subunit ATP11C and an accessory beta subunit TMEM30A. Mg(2+) is required as a cofactor. Post-translationally, proteolytically cleaved by CASP3, CASP6 and CASP7. In terms of processing, phosphorylated at Ser-1113 likely by PRKCA; this creates a functional di-leucine motif that is sufficient for endocytosis. Widely expressed. Expressed in retina, brain, liver and testes (at protein level). Expressed in lung, bone marrow, lymph nodes, prostate, ovary and uterus. Expressed in fetus.

It is found in the cell membrane. The protein localises to the endoplasmic reticulum membrane. The protein resides in the early endosome membrane. It localises to the recycling endosome membrane. It carries out the reaction ATP + H2O + phospholipidSide 1 = ADP + phosphate + phospholipidSide 2.. The enzyme catalyses a 1,2-diacyl-sn-glycero-3-phospho-L-serine(out) + ATP + H2O = a 1,2-diacyl-sn-glycero-3-phospho-L-serine(in) + ADP + phosphate + H(+). It catalyses the reaction a 1,2-diacyl-sn-glycero-3-phosphoethanolamine(out) + ATP + H2O = a 1,2-diacyl-sn-glycero-3-phosphoethanolamine(in) + ADP + phosphate + H(+). Its function is as follows. Catalytic component of a P4-ATPase flippase complex which catalyzes the hydrolysis of ATP coupled to the transport of aminophospholipids, phosphatidylserines (PS) and phosphatidylethanolamines (PE), from the outer to the inner leaflet of the plasma membrane. Major PS-flippase in immune cell subsets. In erythrocyte plasma membrane, it is required to maintain PS in the inner leaflet preventing its exposure on the surface. This asymmetric distribution is critical for the survival of erythrocytes in circulation since externalized PS is a phagocytic signal for erythrocyte clearance by splenic macrophages. Required for B cell differentiation past the pro-B cell stage. Seems to mediate PS flipping in pro-B cells. May be involved in the transport of cholestatic bile acids. The sequence is that of Phospholipid-transporting ATPase 11C from Mus musculus (Mouse).